We begin with the raw amino-acid sequence, 145 residues long: Large ribosomal subunit protein uL13 (145 aa).

The protein belongs to the universal ribosomal protein uL13 family. In terms of assembly, part of the 50S ribosomal subunit.

In terms of biological role, this protein is one of the early assembly proteins of the 50S ribosomal subunit, although it is not seen to bind rRNA by itself. It is important during the early stages of 50S assembly. This chain is Large ribosomal subunit protein uL13, found in Listeria monocytogenes serotype 4b (strain CLIP80459).